Consider the following 228-residue polypeptide: Phosphoribosylformylglycinamidine synthase subunit PurQ (228 aa).

The Glutamine amidotransferase type-1 domain occupies 2–225 (KAAVISFPGS…INQTEGADVR (224 aa)). Residue Cys-86 is the Nucleophile of the active site. Residues His-194 and Glu-196 contribute to the active site.

Part of the FGAM synthase complex composed of 1 PurL, 1 PurQ and 2 PurS subunits.

The protein localises to the cytoplasm. The catalysed reaction is N(2)-formyl-N(1)-(5-phospho-beta-D-ribosyl)glycinamide + L-glutamine + ATP + H2O = 2-formamido-N(1)-(5-O-phospho-beta-D-ribosyl)acetamidine + L-glutamate + ADP + phosphate + H(+). It carries out the reaction L-glutamine + H2O = L-glutamate + NH4(+). Its pathway is purine metabolism; IMP biosynthesis via de novo pathway; 5-amino-1-(5-phospho-D-ribosyl)imidazole from N(2)-formyl-N(1)-(5-phospho-D-ribosyl)glycinamide: step 1/2. In terms of biological role, part of the phosphoribosylformylglycinamidine synthase complex involved in the purines biosynthetic pathway. Catalyzes the ATP-dependent conversion of formylglycinamide ribonucleotide (FGAR) and glutamine to yield formylglycinamidine ribonucleotide (FGAM) and glutamate. The FGAM synthase complex is composed of three subunits. PurQ produces an ammonia molecule by converting glutamine to glutamate. PurL transfers the ammonia molecule to FGAR to form FGAM in an ATP-dependent manner. PurS interacts with PurQ and PurL and is thought to assist in the transfer of the ammonia molecule from PurQ to PurL. The polypeptide is Phosphoribosylformylglycinamidine synthase subunit PurQ (Lacticaseibacillus paracasei (strain ATCC 334 / BCRC 17002 / CCUG 31169 / CIP 107868 / KCTC 3260 / NRRL B-441) (Lactobacillus paracasei)).